The chain runs to 1372 residues: DNA-directed RNA polymerase subunit beta'' (1372 aa).

Residues cysteine 252, cysteine 321, cysteine 328, and cysteine 331 each coordinate Zn(2+).

This sequence belongs to the RNA polymerase beta' chain family. RpoC2 subfamily. As to quaternary structure, in plastids the minimal PEP RNA polymerase catalytic core is composed of four subunits: alpha, beta, beta', and beta''. When a (nuclear-encoded) sigma factor is associated with the core the holoenzyme is formed, which can initiate transcription. Zn(2+) is required as a cofactor.

It is found in the plastid. The protein resides in the organellar chromatophore. The catalysed reaction is RNA(n) + a ribonucleoside 5'-triphosphate = RNA(n+1) + diphosphate. Its function is as follows. DNA-dependent RNA polymerase catalyzes the transcription of DNA into RNA using the four ribonucleoside triphosphates as substrates. This chain is DNA-directed RNA polymerase subunit beta'', found in Paulinella chromatophora.